The chain runs to 115 residues: Ig heavy chain V-III region W3082 (115 aa).

One can recognise an Ig-like domain in the interval E1–S114. A disulfide bond links C22 and C98.

This is Ig heavy chain V-III region W3082 from Mus musculus (Mouse).